The following is a 281-amino-acid chain: tRNA dimethylallyltransferase (281 aa).

Interaction with substrate tRNA stretches follow at residues 13–16 (DSAQ) and 133–137 (QRITR).

This sequence belongs to the IPP transferase family. Monomer. Mg(2+) is required as a cofactor.

It catalyses the reaction adenosine(37) in tRNA + dimethylallyl diphosphate = N(6)-dimethylallyladenosine(37) in tRNA + diphosphate. Catalyzes the transfer of a dimethylallyl group onto the adenine at position 37 in tRNAs that read codons beginning with uridine, leading to the formation of N6-(dimethylallyl)adenosine (i(6)A). This Novosphingobium aromaticivorans (strain ATCC 700278 / DSM 12444 / CCUG 56034 / CIP 105152 / NBRC 16084 / F199) protein is tRNA dimethylallyltransferase.